The primary structure comprises 369 residues: Anthranilate phosphoribosyltransferase (369 aa).

5-phospho-alpha-D-ribose 1-diphosphate contacts are provided by residues Gly-99, 102–103, 109–112, 127–135, and Ser-139; these read GD, NVST, and KHGNRGVSS. Gly-99 contributes to the anthranilate binding site. Ser-111 contacts Mg(2+). Residue Asn-130 participates in anthranilate binding. Arg-185 is an anthranilate binding site. Mg(2+) is bound by residues Asp-244 and Glu-245.

The protein belongs to the anthranilate phosphoribosyltransferase family. In terms of assembly, homodimer. It depends on Mg(2+) as a cofactor.

It carries out the reaction N-(5-phospho-beta-D-ribosyl)anthranilate + diphosphate = 5-phospho-alpha-D-ribose 1-diphosphate + anthranilate. Its pathway is amino-acid biosynthesis; L-tryptophan biosynthesis; L-tryptophan from chorismate: step 2/5. Catalyzes the transfer of the phosphoribosyl group of 5-phosphorylribose-1-pyrophosphate (PRPP) to anthranilate to yield N-(5'-phosphoribosyl)-anthranilate (PRA). The protein is Anthranilate phosphoribosyltransferase of Psychrobacter sp. (strain PRwf-1).